Consider the following 942-residue polypeptide: Isoleucine--tRNA ligase (942 aa).

The 'HIGH' region signature appears at 58 to 68 (PYANGDIHIGH). Glu-566 provides a ligand contact to L-isoleucyl-5'-AMP. Positions 607 to 611 (KMSKS) match the 'KMSKS' region motif. Lys-610 serves as a coordination point for ATP. Cys-905, Cys-908, Cys-925, and Cys-928 together coordinate Zn(2+).

It belongs to the class-I aminoacyl-tRNA synthetase family. IleS type 1 subfamily. Monomer. Zn(2+) is required as a cofactor.

Its subcellular location is the cytoplasm. The enzyme catalyses tRNA(Ile) + L-isoleucine + ATP = L-isoleucyl-tRNA(Ile) + AMP + diphosphate. Its function is as follows. Catalyzes the attachment of isoleucine to tRNA(Ile). As IleRS can inadvertently accommodate and process structurally similar amino acids such as valine, to avoid such errors it has two additional distinct tRNA(Ile)-dependent editing activities. One activity is designated as 'pretransfer' editing and involves the hydrolysis of activated Val-AMP. The other activity is designated 'posttransfer' editing and involves deacylation of mischarged Val-tRNA(Ile). This Vibrio campbellii (strain ATCC BAA-1116) protein is Isoleucine--tRNA ligase.